The primary structure comprises 461 residues: V-type ATP synthase beta chain (461 aa).

Belongs to the ATPase alpha/beta chains family.

Its function is as follows. Produces ATP from ADP in the presence of a proton gradient across the membrane. The V-type beta chain is a regulatory subunit. This chain is V-type ATP synthase beta chain, found in Clostridium botulinum (strain 657 / Type Ba4).